The following is a 409-amino-acid chain: Elongation factor Tu, chloroplastic (409 aa).

In terms of domain architecture, tr-type G spans 10-214; the sequence is KPHINIGTIG…AVDAYIPTPE (205 aa). The interval 19-26 is G1; sequence GHVDHGKT. 19-26 is a GTP binding site; it reads GHVDHGKT. T26 serves as a coordination point for Mg(2+). Residues 60–64 are G2; it reads GITIN. The G3 stretch occupies residues 81 to 84; the sequence is DCPG. GTP is bound by residues 81–85 and 136–139; these read DCPGH and NKQD. The segment at 136 to 139 is G4; that stretch reads NKQD. The tract at residues 174–176 is G5; that stretch reads SRL.

Belongs to the TRAFAC class translation factor GTPase superfamily. Classic translation factor GTPase family. EF-Tu/EF-1A subfamily.

Its subcellular location is the plastid. It localises to the chloroplast. The enzyme catalyses GTP + H2O = GDP + phosphate + H(+). In terms of biological role, GTP hydrolase that promotes the GTP-dependent binding of aminoacyl-tRNA to the A-site of ribosomes during protein biosynthesis. This chain is Elongation factor Tu, chloroplastic (tufA), found in Stephanocyclus meneghinianus (Diatom).